A 323-amino-acid chain; its full sequence is MVTILDTINPDAKRVRHPEKAHRPDTEVMRKPDWIRVKAPTSKGYAETRAIVKEHKLVTVCEEAGCPNIGECWDKKHATFMIMGEICTRACAFCNVATGKPNALDMAEPENVAKAVKEMGLSHVVITSVDRDDLEDGGAEHFEKVIWAIRAASPATTIEILTPDFLKKPGALERVVAAKPDVFNHNMETVPGNYLTVRPGARYFHSIRLLQRVKELDPTMFTKSGIMVGLGEERNEVLQLMDDLRTADVDFLTIGQYLQPTRKHHKVESFVTPDEFKSYETVAYSKGFLMVASSPLTRSSHHAGDDFARLRAAREKKLLMAAE.

C61, C66, C72, C87, C91, C94, and S300 together coordinate [4Fe-4S] cluster. In terms of domain architecture, Radical SAM core spans 73-289 (WDKKHATFMI…ETVAYSKGFL (217 aa)).

This sequence belongs to the radical SAM superfamily. Lipoyl synthase family. Requires [4Fe-4S] cluster as cofactor.

Its subcellular location is the cytoplasm. The catalysed reaction is [[Fe-S] cluster scaffold protein carrying a second [4Fe-4S](2+) cluster] + N(6)-octanoyl-L-lysyl-[protein] + 2 oxidized [2Fe-2S]-[ferredoxin] + 2 S-adenosyl-L-methionine + 4 H(+) = [[Fe-S] cluster scaffold protein] + N(6)-[(R)-dihydrolipoyl]-L-lysyl-[protein] + 4 Fe(3+) + 2 hydrogen sulfide + 2 5'-deoxyadenosine + 2 L-methionine + 2 reduced [2Fe-2S]-[ferredoxin]. Its pathway is protein modification; protein lipoylation via endogenous pathway; protein N(6)-(lipoyl)lysine from octanoyl-[acyl-carrier-protein]: step 2/2. Catalyzes the radical-mediated insertion of two sulfur atoms into the C-6 and C-8 positions of the octanoyl moiety bound to the lipoyl domains of lipoate-dependent enzymes, thereby converting the octanoylated domains into lipoylated derivatives. The sequence is that of Lipoyl synthase from Rhizobium leguminosarum bv. trifolii (strain WSM2304).